The following is a 231-amino-acid chain: Somatolactin (231 aa).

The first 24 residues, 1 to 24 (MLMFTAIQRGVWVALLWPHLLTAS), serve as a signal peptide directing secretion. Intrachain disulfides connect C29–C39, C89–C205, and C222–C230. 2 N-linked (GlcNAc...) asparagine glycosylation sites follow: N35 and N145.

It belongs to the somatotropin/prolactin family. Pituitary gland.

It localises to the secreted. The protein is Somatolactin of Siganus guttatus (Orange-spotted spinefoot).